The following is a 466-amino-acid chain: Argininosuccinate lyase (466 aa).

The protein belongs to the lyase 1 family. Argininosuccinate lyase subfamily.

The protein localises to the cytoplasm. It catalyses the reaction 2-(N(omega)-L-arginino)succinate = fumarate + L-arginine. The protein operates within amino-acid biosynthesis; L-arginine biosynthesis; L-arginine from L-ornithine and carbamoyl phosphate: step 3/3. This chain is Argininosuccinate lyase, found in Clostridium perfringens (strain ATCC 13124 / DSM 756 / JCM 1290 / NCIMB 6125 / NCTC 8237 / Type A).